Reading from the N-terminus, the 120-residue chain is Large ribosomal subunit protein bL17 (120 aa).

This sequence belongs to the bacterial ribosomal protein bL17 family. In terms of assembly, part of the 50S ribosomal subunit. Contacts protein L32.

The sequence is that of Large ribosomal subunit protein bL17 from Geobacillus thermodenitrificans (strain NG80-2).